The sequence spans 821 residues: Enhancer of polycomb-like protein 1 (821 aa).

The span at 1–12 (MSSNGGSNTNER) shows a compositional bias: polar residues. Disordered stretches follow at residues 1-43 (MSSN…TRFR), 427-485 (KAAA…QPAM), and 779-799 (QFLQ…PINP). 2 stretches are compositionally biased toward low complexity: residues 18–39 (SGSL…DSGS) and 449–465 (EQAA…SSSQ). The segment covering 786–799 (ENGSPNNATMPINP) has biased composition (polar residues).

Belongs to the enhancer of polycomb family. In terms of assembly, component of the NuA4 histone acetyltransferase complex.

It is found in the nucleus. Its function is as follows. Component of the NuA4 histone acetyltransferase complex which is involved in transcriptional activation of selected genes principally by acetylation of nucleosomal histone H4 and H2A. The NuA4 complex is also involved in DNA repair. Involved in gene silencing by neighboring heterochromatin, blockage of the silencing spreading along the chromosome, and required for cell cycle progression through G2/M. The sequence is that of Enhancer of polycomb-like protein 1 (EPL1) from Candida glabrata (strain ATCC 2001 / BCRC 20586 / JCM 3761 / NBRC 0622 / NRRL Y-65 / CBS 138) (Yeast).